The chain runs to 149 residues: Large ribosomal subunit protein eL24B (149 aa).

Ser-50 is modified (phosphoserine). The disordered stretch occupies residues 96–149 (QRPEVRAAARAAALKQRKDKRAASESEKKAIKAKSAASSARGQAIKNAKVAARR). Over residues 116 to 125 (RAASESEKKA) the composition is skewed to basic and acidic residues.

Belongs to the eukaryotic ribosomal protein eL24 family. As to quaternary structure, component of the large ribosomal subunit (LSU). Mature yeast ribosomes consist of a small (40S) and a large (60S) subunit. The 40S small subunit contains 1 molecule of ribosomal RNA (18S rRNA) and at least 33 different proteins. The large 60S subunit contains 3 rRNA molecules (25S, 5.8S and 5S rRNA) and at least 46 different proteins.

The protein resides in the cytoplasm. Its function is as follows. Component of the ribosome, a large ribonucleoprotein complex responsible for the synthesis of proteins in the cell. The small ribosomal subunit (SSU) binds messenger RNAs (mRNAs) and translates the encoded message by selecting cognate aminoacyl-transfer RNA (tRNA) molecules. The large subunit (LSU) contains the ribosomal catalytic site termed the peptidyl transferase center (PTC), which catalyzes the formation of peptide bonds, thereby polymerizing the amino acids delivered by tRNAs into a polypeptide chain. The nascent polypeptides leave the ribosome through a tunnel in the LSU and interact with protein factors that function in enzymatic processing, targeting, and the membrane insertion of nascent chains at the exit of the ribosomal tunnel. The sequence is that of Large ribosomal subunit protein eL24B (rpl2402) from Schizosaccharomyces pombe (strain 972 / ATCC 24843) (Fission yeast).